Consider the following 358-residue polypeptide: UDP-N-acetylglucosamine--N-acetylmuramyl-(pentapeptide) pyrophosphoryl-undecaprenol N-acetylglucosamine transferase (358 aa).

UDP-N-acetyl-alpha-D-glucosamine-binding positions include 10 to 12 (TGG), Asn-124, Arg-165, Ser-191, Ile-246, and Gln-291.

The protein belongs to the glycosyltransferase 28 family. MurG subfamily.

The protein localises to the cell inner membrane. The enzyme catalyses di-trans,octa-cis-undecaprenyl diphospho-N-acetyl-alpha-D-muramoyl-L-alanyl-D-glutamyl-meso-2,6-diaminopimeloyl-D-alanyl-D-alanine + UDP-N-acetyl-alpha-D-glucosamine = di-trans,octa-cis-undecaprenyl diphospho-[N-acetyl-alpha-D-glucosaminyl-(1-&gt;4)]-N-acetyl-alpha-D-muramoyl-L-alanyl-D-glutamyl-meso-2,6-diaminopimeloyl-D-alanyl-D-alanine + UDP + H(+). It participates in cell wall biogenesis; peptidoglycan biosynthesis. In terms of biological role, cell wall formation. Catalyzes the transfer of a GlcNAc subunit on undecaprenyl-pyrophosphoryl-MurNAc-pentapeptide (lipid intermediate I) to form undecaprenyl-pyrophosphoryl-MurNAc-(pentapeptide)GlcNAc (lipid intermediate II). The sequence is that of UDP-N-acetylglucosamine--N-acetylmuramyl-(pentapeptide) pyrophosphoryl-undecaprenol N-acetylglucosamine transferase from Citrifermentans bemidjiense (strain ATCC BAA-1014 / DSM 16622 / JCM 12645 / Bem) (Geobacter bemidjiensis).